The primary structure comprises 214 residues: Small ribosomal subunit protein uS3c (214 aa).

The KH type-2 domain maps to 39-111 (IRTYLNKLAK…QITINVVEVE (73 aa)).

It belongs to the universal ribosomal protein uS3 family. In terms of assembly, part of the 30S ribosomal subunit.

The protein localises to the plastid. It localises to the chloroplast. The chain is Small ribosomal subunit protein uS3c (rps3) from Thalassiosira pseudonana (Marine diatom).